Consider the following 148-residue polypeptide: Large ribosomal subunit protein bL9 (148 aa).

It belongs to the bacterial ribosomal protein bL9 family.

Binds to the 23S rRNA. This is Large ribosomal subunit protein bL9 from Pseudomonas fluorescens (strain ATCC BAA-477 / NRRL B-23932 / Pf-5).